The sequence spans 782 residues: Formin-like protein 9 (782 aa).

A signal peptide spans 1-24 (MQNFWFAIFFFLLTCAPPSPLSYA). Residues 102–122 (LLLPALSAVLVIATVIGLALF) form a helical membrane-spanning segment. Disordered stretches follow at residues 191 to 223 (DSPE…EEEE), 264 to 287 (MSPP…RLRV), and 387 to 407 (SSSQ…PPLV). Residues 214 to 223 (EVNEEDEEEE) show a composition bias toward acidic residues. Pro residues predominate over residues 396–407 (ALPPPTRPPPLV). In terms of domain architecture, FH2 spans 406–782 (LVPPSQPFVV…LDQVCKEMGD (377 aa)).

It belongs to the formin-like family. Class-I subfamily.

It localises to the membrane. Might be involved in the organization and polarity of the actin cytoskeleton. The chain is Formin-like protein 9 (FH9) from Arabidopsis thaliana (Mouse-ear cress).